The sequence spans 115 residues: NADH-ubiquinone oxidoreductase chain 3 (115 aa).

Helical transmembrane passes span 3–23 (LILTLLINTLLSSVLVLIAFW), 55–75 (FFLVAITFLLFDLEIALLLPL), and 86–106 (TMLTMALILISLLAASLAYEW).

The protein belongs to the complex I subunit 3 family. As to quaternary structure, core subunit of respiratory chain NADH dehydrogenase (Complex I) which is composed of 45 different subunits. Interacts with TMEM186. Interacts with TMEM242.

Its subcellular location is the mitochondrion inner membrane. It catalyses the reaction a ubiquinone + NADH + 5 H(+)(in) = a ubiquinol + NAD(+) + 4 H(+)(out). Its function is as follows. Core subunit of the mitochondrial membrane respiratory chain NADH dehydrogenase (Complex I) which catalyzes electron transfer from NADH through the respiratory chain, using ubiquinone as an electron acceptor. Essential for the catalytic activity of complex I. This is NADH-ubiquinone oxidoreductase chain 3 from Rhinoceros unicornis (Greater Indian rhinoceros).